The following is a 316-amino-acid chain: 4-hydroxy-3-methylbut-2-enyl diphosphate reductase (316 aa).

A [4Fe-4S] cluster-binding site is contributed by Cys-12. His-41 and His-74 together coordinate (2E)-4-hydroxy-3-methylbut-2-enyl diphosphate. The dimethylallyl diphosphate site is built by His-41 and His-74. Residues His-41 and His-74 each contribute to the isopentenyl diphosphate site. Cys-96 provides a ligand contact to [4Fe-4S] cluster. Residue His-124 coordinates (2E)-4-hydroxy-3-methylbut-2-enyl diphosphate. His-124 lines the dimethylallyl diphosphate pocket. His-124 serves as a coordination point for isopentenyl diphosphate. Glu-126 serves as the catalytic Proton donor. Residue Thr-167 coordinates (2E)-4-hydroxy-3-methylbut-2-enyl diphosphate. Cys-197 contributes to the [4Fe-4S] cluster binding site. Positions 225, 226, 227, and 269 each coordinate (2E)-4-hydroxy-3-methylbut-2-enyl diphosphate. Residues Ser-225, Ser-226, Asn-227, and Ser-269 each contribute to the dimethylallyl diphosphate site. Ser-225, Ser-226, Asn-227, and Ser-269 together coordinate isopentenyl diphosphate.

It belongs to the IspH family. In terms of assembly, homodimer. The cofactor is [4Fe-4S] cluster.

The enzyme catalyses isopentenyl diphosphate + 2 oxidized [2Fe-2S]-[ferredoxin] + H2O = (2E)-4-hydroxy-3-methylbut-2-enyl diphosphate + 2 reduced [2Fe-2S]-[ferredoxin] + 2 H(+). It catalyses the reaction dimethylallyl diphosphate + 2 oxidized [2Fe-2S]-[ferredoxin] + H2O = (2E)-4-hydroxy-3-methylbut-2-enyl diphosphate + 2 reduced [2Fe-2S]-[ferredoxin] + 2 H(+). The protein operates within isoprenoid biosynthesis; dimethylallyl diphosphate biosynthesis; dimethylallyl diphosphate from (2E)-4-hydroxy-3-methylbutenyl diphosphate: step 1/1. It participates in isoprenoid biosynthesis; isopentenyl diphosphate biosynthesis via DXP pathway; isopentenyl diphosphate from 1-deoxy-D-xylulose 5-phosphate: step 6/6. Functionally, catalyzes the conversion of 1-hydroxy-2-methyl-2-(E)-butenyl 4-diphosphate (HMBPP) into a mixture of isopentenyl diphosphate (IPP) and dimethylallyl diphosphate (DMAPP). Acts in the terminal step of the DOXP/MEP pathway for isoprenoid precursor biosynthesis. The protein is 4-hydroxy-3-methylbut-2-enyl diphosphate reductase of Klebsiella pneumoniae (strain 342).